A 91-amino-acid polypeptide reads, in one-letter code: Small ribosomal subunit protein uS19 (91 aa).

Belongs to the universal ribosomal protein uS19 family.

In terms of biological role, protein S19 forms a complex with S13 that binds strongly to the 16S ribosomal RNA. This Afipia carboxidovorans (strain ATCC 49405 / DSM 1227 / KCTC 32145 / OM5) (Oligotropha carboxidovorans) protein is Small ribosomal subunit protein uS19.